The sequence spans 207 residues: N-(5'-phosphoribosyl)anthranilate isomerase (207 aa).

The protein belongs to the TrpF family.

It catalyses the reaction N-(5-phospho-beta-D-ribosyl)anthranilate = 1-(2-carboxyphenylamino)-1-deoxy-D-ribulose 5-phosphate. The protein operates within amino-acid biosynthesis; L-tryptophan biosynthesis; L-tryptophan from chorismate: step 3/5. The chain is N-(5'-phosphoribosyl)anthranilate isomerase from Legionella pneumophila subsp. pneumophila (strain Philadelphia 1 / ATCC 33152 / DSM 7513).